The primary structure comprises 185 residues: MDIDPYKEFGATVELLSFLPSDFFPSVRDLLDTASALYREALESPEHCSPHHTALRQAILCWVELMTLATWVGNNLQDPASRDLVVNYVNTNMGLKIRQLLWFHISCLTFGRETVLEYLVSFGVWIRTPPAYRPPNAPILSTLPETTVVRRRDRGRSPRRRTPSPRRRRSQSPRRRRSQSRESQC.

Residues 136–185 are disordered; that stretch reads NAPILSTLPETTVVRRRDRGRSPRRRTPSPRRRRSQSPRRRRSQSRESQC. Residues 149 to 178 show a composition bias toward basic residues; it reads VRRRDRGRSPRRRTPSPRRRRSQSPRRRRS. Phosphoserine; by host occurs at positions 157, 164, and 172. The stretch at 157–163 is one 1; half-length repeat; the sequence is SPRRRTP. The segment at 157–179 is 3 X 8 AA repeats of S-P-R-R-R-[PR]-S-Q; that stretch reads SPRRRTPSPRRRRSQSPRRRRSQ. Positions 160 to 177 match the Bipartite nuclear localization signal motif; it reads RRTPSPRRRRSQSPRRRR. Tandem repeats lie at residues 164–171 and 172–179. Residues 179 to 185 form an RNA binding region; the sequence is QSRESQC.

This sequence belongs to the orthohepadnavirus core antigen family. In terms of assembly, homodimerizes, then multimerizes. Interacts with cytosol exposed regions of viral L glycoprotein present in the reticulum-to-Golgi compartment. Interacts with human FLNB. Phosphorylated form interacts with host importin alpha; this interaction depends on the exposure of the NLS, which itself depends upon genome maturation and/or phosphorylation of the capsid protein. Interacts with host NUP153. Phosphorylated by host SRPK1, SRPK2, and maybe protein kinase C or GAPDH. Phosphorylation is critical for pregenomic RNA packaging. Protein kinase C phosphorylation is stimulated by HBx protein and may play a role in transport of the viral genome to the nucleus at the late step during the viral replication cycle.

The protein localises to the virion. It is found in the host cytoplasm. Functionally, self assembles to form an icosahedral capsid. Most capsids appear to be large particles with an icosahedral symmetry of T=4 and consist of 240 copies of capsid protein, though a fraction forms smaller T=3 particles consisting of 180 capsid proteins. Entering capsids are transported along microtubules to the nucleus. Phosphorylation of the capsid is thought to induce exposure of nuclear localization signal in the C-terminal portion of the capsid protein that allows binding to the nuclear pore complex via the importin (karyopherin-) alpha and beta. Capsids are imported in intact form through the nuclear pore into the nuclear basket, where it probably binds NUP153. Only capsids that contain the mature viral genome can release the viral DNA and capsid protein into the nucleoplasm. Immature capsids get stuck in the basket. Capsids encapsulate the pre-genomic RNA and the P protein. Pre-genomic RNA is reverse-transcribed into DNA while the capsid is still in the cytoplasm. The capsid can then either be directed to the nucleus, providing more genomes for transcription, or bud through the endoplasmic reticulum to provide new virions. This chain is Capsid protein, found in Homo sapiens (Human).